The primary structure comprises 481 residues: Protein hedgehog (481 aa).

The N-palmitoyl cysteine moiety is linked to residue Cys93. Ca(2+) is bound by residues Glu157, Glu158, Asp163, Thr193, Glu194, Asp197, and Asp199. Gly265 is lipidated: Cholesterol glycine ester.

It belongs to the hedgehog family. Interacts with shf. The C-terminal part of the hedgehog protein precursor displays an autoproteolysis activity that results in the cleavage of the full-length protein into two parts (N-product and C-product). In addition, the C-terminal part displays a cholesterol transferase activity that results by the covalent attachment of a cholesterol moiety to the C-terminal of the newly generated N-product. The N-product is the active species in both local and long-range signaling, whereas the C-product has no signaling activity. In terms of processing, cholesterylation is required for N-product targeting to lipid rafts and multimerization. Post-translationally, N-palmitoylation by Rasp of the hedgehog N-product, within the secretory pathway, is required for the embryonic and larval patterning activities of the hedgehog signal.

It is found in the nucleus. It localises to the cytoplasm. Its subcellular location is the cell membrane. It catalyses the reaction glycyl-L-cysteinyl-[protein] + cholesterol + H(+) = [protein]-C-terminal glycyl cholesterol ester + N-terminal L-cysteinyl-[protein]. Functionally, the C-terminal part of the hedgehog protein precursor displays an autoproteolysis activity that results in the cleavage of the full-length protein into two parts (N-product and C-product). In addition, the C-terminal part displays a cholesterol transferase activity that results by the covalent attachment of a cholesterol moiety to the C-terminal of the newly generated N-product. Once cleaved, the C-product has no signaling activity and diffuses from the cell. In terms of biological role, the dually lipidated hedgehog protein N-product is a morphogen which is essential for a variety of patterning events during development. Establishes the anterior-posterior axis of the embryonic segments and patterns the larval imaginal disks. Binds to the patched (ptc) receptor, which functions in association with smoothened (smo), to activate the transcription of target genes wingless (wg), decapentaplegic (dpp) and ptc. In the absence of hh, ptc represses the constitutive signaling activity of smo through fused (fu). Essential component of a signaling pathway which regulates the Duox-dependent gut immune response to bacterial uracil; required to activate Cad99C-dependent endosome formation, norpA-dependent Ca2+ mobilization and p38 MAPK, which are essential steps in the Duox-dependent production of reactive oxygen species (ROS) in response to intestinal bacterial infection. During photoreceptor differentiation, it up-regulates transcription of Ubr3, which in turn promotes the hh-signaling pathway by mediating the ubiquitination and degradation of cos. The sequence is that of Protein hedgehog (hh-1) from Drosophila pseudoobscura pseudoobscura (Fruit fly).